The following is a 333-amino-acid chain: Adenosine deaminase (333 aa).

His12 and His14 together coordinate Zn(2+). Substrate contacts are provided by His14, Asp16, and Gly170. His197 contacts Zn(2+). Glu200 serves as the catalytic Proton donor. Asp278 provides a ligand contact to Zn(2+). Asp279 contacts substrate.

Belongs to the metallo-dependent hydrolases superfamily. Adenosine and AMP deaminases family. Adenosine deaminase subfamily. Zn(2+) is required as a cofactor.

It catalyses the reaction adenosine + H2O + H(+) = inosine + NH4(+). It carries out the reaction 2'-deoxyadenosine + H2O + H(+) = 2'-deoxyinosine + NH4(+). In terms of biological role, catalyzes the hydrolytic deamination of adenosine and 2-deoxyadenosine. In Escherichia coli O157:H7, this protein is Adenosine deaminase.